A 375-amino-acid polypeptide reads, in one-letter code: AT-rich binding protein (375 aa).

The C2H2-type 1 zinc finger occupies 29–52; sequence IVCHTCQEELQTQDQFWKHIQDEH. Residues 110 to 119 are compositionally biased toward basic and acidic residues; the sequence is DDQREMDIHE. The segment at 110-142 is disordered; it reads DDQREMDIHEAQQQQHQQQQQHQQQQQLQQQQQ. The segment covering 121-142 has biased composition (low complexity); sequence QQQQHQQQQQHQQQQQLQQQQQ. 2 C2H2-type zinc fingers span residues 308–332 and 338–361; these read YICDYETCGLKFKYKSRMELHRVVH and FNCELCSASFKQSCNLSTHRKKKH.

It localises to the nucleus. May be a transcription factor for genes having (A+T) stretches in their promoter and/or enhancer regions. Binds to AT rich DNA. The polypeptide is AT-rich binding protein (Drosophila pseudoobscura pseudoobscura (Fruit fly)).